The primary structure comprises 872 residues: DNA polymerase 1 (872 aa).

This sequence belongs to the DNA polymerase type-B family.

It catalyses the reaction DNA(n) + a 2'-deoxyribonucleoside 5'-triphosphate = DNA(n+1) + diphosphate. This chain is DNA polymerase 1 (pol-alpha), found in Sulfurisphaera ohwakuensis.